Here is a 649-residue protein sequence, read N- to C-terminus: Alpha-amylase (649 aa).

The active-site Nucleophile is Glu-124. The active-site Proton donor is the Asp-215.

It belongs to the glycosyl hydrolase 57 family. As to quaternary structure, homodimer.

It carries out the reaction Endohydrolysis of (1-&gt;4)-alpha-D-glucosidic linkages in polysaccharides containing three or more (1-&gt;4)-alpha-linked D-glucose units.. Functionally, displays a broad range of substrate specificity, with the capacity to hydrolyze carbohydrates as simple as maltotriose. The polypeptide is Alpha-amylase (amyA) (Pyrococcus furiosus (strain ATCC 43587 / DSM 3638 / JCM 8422 / Vc1)).